The sequence spans 315 residues: MTIDSGFNHITVLLDEAVEALALRADGCYLDGTFGRGGHSRLILSKLGPQGRLLGFDKDPQAIATGQALAAEDGRFVIVQRSFAELGAEVAERGLHGKVSGVLLDLGVSSPQLDDPERGFSFLNDGPLDMRMNPGQGISAAEFIATAPVEEIARVFKEYGEERFAGRMARAVVERREKQPFTRTADLAEVLKVANPAWEKGKNPATRAFQGLRIHVNNELGDLEAGLEAALDALEVGGRLAVISFHSLEDRIVKLFMRKLVKGEADNLPRNLPVQHKVFEPKIKLIGKAQFASEAELKANPRSRSAVMRVAEKLR.

Residues 37-39 (GGH), D57, F83, D105, and Q112 contribute to the S-adenosyl-L-methionine site.

The protein belongs to the methyltransferase superfamily. RsmH family.

The protein resides in the cytoplasm. The catalysed reaction is cytidine(1402) in 16S rRNA + S-adenosyl-L-methionine = N(4)-methylcytidine(1402) in 16S rRNA + S-adenosyl-L-homocysteine + H(+). Functionally, specifically methylates the N4 position of cytidine in position 1402 (C1402) of 16S rRNA. This chain is Ribosomal RNA small subunit methyltransferase H, found in Pseudomonas putida (strain GB-1).